The chain runs to 245 residues: Orotidine 5'-phosphate decarboxylase (245 aa).

Substrate is bound by residues D22, K44, 71–80 (DLKFHDIPNT), T131, R192, Q201, G221, and R222. The Proton donor role is filled by K73.

The protein belongs to the OMP decarboxylase family. Type 1 subfamily. In terms of assembly, homodimer.

It catalyses the reaction orotidine 5'-phosphate + H(+) = UMP + CO2. Its pathway is pyrimidine metabolism; UMP biosynthesis via de novo pathway; UMP from orotate: step 2/2. Functionally, catalyzes the decarboxylation of orotidine 5'-monophosphate (OMP) to uridine 5'-monophosphate (UMP). This is Orotidine 5'-phosphate decarboxylase from Yersinia pestis bv. Antiqua (strain Antiqua).